We begin with the raw amino-acid sequence, 143 residues long: Sporulation-specific cell division protein SsgB (143 aa).

Belongs to the SsgA family. As to quaternary structure, interacts with SsgA. Interacts with FtsZ (via N-terminus).

The protein localises to the cell septum. Its function is as follows. Involved in sporulation-specific cell division. Required for early stages of sporulation. Important in the process of growth cessation prior to sporulation-specific cell division. Recruits cell division protein FtsZ to the future septum sites and tethers the contractile ring structure (Z ring) to the cytoplasmic membrane during sporulation. Stimulates polymerization and filament length of FtsZ in vitro. This Frankia casuarinae (strain DSM 45818 / CECT 9043 / HFP020203 / CcI3) protein is Sporulation-specific cell division protein SsgB.